The following is a 150-amino-acid chain: C-type lectin 37Db (150 aa).

The N-terminal stretch at 1–20 (MMVKLLLLFLVCWSALPLES) is a signal peptide. One can recognise a C-type lectin domain in the interval 31-148 (IGEKQYYISL…CYSSVAFICQ (118 aa)). 2 disulfides stabilise this stretch: Cys52–Cys147 and Cys122–Cys139. Residues Asn107 and Asn115 are each glycosylated (N-linked (GlcNAc...) asparagine).

Its subcellular location is the secreted. In terms of biological role, galactose-specific lectin that displays calcium-dependent activity. Binds to the surface of hemocytes and enhances hemocyte encapsulation and melanization. This is likely by interacting with carbohydrates on the surface of the hemocytes. Also displays agglutination activity against the Gram-negative bacterium E.coli. This is C-type lectin 37Db from Drosophila melanogaster (Fruit fly).